The sequence spans 251 residues: Endonuclease NucS (251 aa).

Residues leucine 230–arginine 240 show a composition bias toward basic and acidic residues. The disordered stretch occupies residues leucine 230–proline 251.

Belongs to the NucS endonuclease family. Homodimer. Interacts with PCNA.

It is found in the cytoplasm. With respect to regulation, activity is modulated by PCNA. PCNA increases the binding affinity of NucS towards ssDNA as well as branched DNA substrates carrying either 3' or 5' flaps. PCNA is also required for optimal loading of NucS on its substrates and to direct activity towards ss/dsDNA junction. In terms of biological role, cleaves both 3' and 5' ssDNA extremities of branched DNA structures. Binds to ssDNA. In Pyrococcus abyssi (strain GE5 / Orsay), this protein is Endonuclease NucS.